The chain runs to 316 residues: tRNA uridine(34) hydroxylase (316 aa).

In terms of domain architecture, Rhodanese spans 136–230; the sequence is ADENTVVVDK…YLEEVPREQS (95 aa). C190 (cysteine persulfide intermediate) is an active-site residue.

This sequence belongs to the TrhO family.

It carries out the reaction uridine(34) in tRNA + AH2 + O2 = 5-hydroxyuridine(34) in tRNA + A + H2O. Functionally, catalyzes oxygen-dependent 5-hydroxyuridine (ho5U) modification at position 34 in tRNAs. This is tRNA uridine(34) hydroxylase from Brucella abortus (strain 2308).